Reading from the N-terminus, the 685-residue chain is Keratin, type II cytoskeletal 2 epidermal (685 aa).

The segment at 1–20 is disordered; it reads MSCQISCKSRRGGGGGGGGG. The segment at 1–196 is head; sequence MSCQISCKSR…DPEIQNVKSQ (196 aa). Residue R22 is modified to Asymmetric dimethylarginine. Residues S25 and S28 each carry the phosphoserine modification. R52 bears the Omega-N-methylarginine mark. A Phosphoserine modification is found at S64. A coil 1A region spans residues 197–232; it reads EREQIKTLNNKFASFIDTVRFLEQQNQVLHTKWELL. One can recognise an IF rod domain in the interval 197–511; it reads EREQIKTLNN…KLLEGEECRM (315 aa). Residues 233 to 251 form a linker 1 region; the sequence is QQLDVGTRTTNLDPVFQAY. The segment at 252 to 343 is coil 1B; sequence IGILKKQVDR…TLYDTELSQL (92 aa). A linker 12 region spans residues 344–367; that stretch reads QQNVTDTNVILSMDNNRNLDLDSI. A coil 2 region spans residues 368 to 507; the sequence is IAEVQSQYEI…ATYRKLLEGE (140 aa). The interval 508 to 685 is tail; it reads ECRMSGDFSD…CGSGVTFSFR (178 aa). The interval 532-685 is disordered; it reads VASKAGFGSG…CGSGVTFSFR (154 aa). The segment covering 538–678 has biased composition (gly residues); the sequence is FGSGGQSSGG…GSGSGEGCGS (141 aa). Omega-N-methylarginine occurs at positions 554, 588, 603, and 653.

It belongs to the intermediate filament family. In terms of assembly, heterotetramer of two type I and two type II keratins. Associates with KRT10.

It is found in the cytoplasm. Its function is as follows. Probably contributes to terminal cornification. Associated with keratinocyte activation, proliferation and keratinization. Required for maintenance of corneocytes and keratin filaments in suprabasal keratinocytes in the epidermis of the ear, potentially via moderation of expression and localization of keratins and their partner proteins. Plays a role in the establishment of the epidermal barrier on plantar skin. The chain is Keratin, type II cytoskeletal 2 epidermal from Rattus norvegicus (Rat).